We begin with the raw amino-acid sequence, 492 residues long: Catalase isozyme 2 (492 aa).

Active-site residues include His-65 and Asn-138. Tyr-348 is a heme binding site.

The protein belongs to the catalase family. In terms of assembly, homotetramer. The cofactor is heme.

It localises to the peroxisome. It carries out the reaction 2 H2O2 = O2 + 2 H2O. Functionally, occurs in almost all aerobically respiring organisms and serves to protect cells from the toxic effects of hydrogen peroxide. The polypeptide is Catalase isozyme 2 (CAT2) (Nicotiana plumbaginifolia (Leadwort-leaved tobacco)).